The primary structure comprises 469 residues: Zinc finger CCCH domain-containing protein 30 (469 aa).

The segment at 415 to 443 adopts a C3H1-type zinc-finger fold; that stretch reads VRPMKPCAYFNSPKGCRNGASCTFLHDAS. Residues 444–469 are disordered; it reads APTRKDHQKQKGSKRIKLDNTMGGRN. Over residues 449–458 the composition is skewed to basic residues; that stretch reads DHQKQKGSKR.

The protein is Zinc finger CCCH domain-containing protein 30 of Oryza sativa subsp. japonica (Rice).